A 343-amino-acid chain; its full sequence is MAEFISSIQAMGVAYLGETLWTLVWTILKIAVLIAPILFCVTYLTLAERRLIGFMQVRLGPNRVGVFGILQPLADAVKLFVKETMLPAKAHRTMFILAPILTFSTALVSWAVVPFSPELVLADVNVGVLFILAMSSLGAYGVLLSGWASNTRYSLLGGLRSAAQMISYEVSMGFTLVPVIMLSGSLNLGDIVESQKGLWYALPLLPGFFIYFISVVAETNRAPFDLPEAEAELVSGFCTEYSAMTYGMFFLGEYANIIMVSVLGSLMFLGGWLPPIEALSFIPGIVWLILKTGVLIFFFLWLRATFPRYRYDQLMRLGWKVFLPISLAWIFIVGLAMHLLDMA.

A run of 8 helical transmembrane segments spans residues 21-41 (WTLV…LFCV), 95-115 (FILA…VVPF), 124-144 (VNVG…GVLL), 172-192 (MGFT…GDIV), 197-217 (GLWY…SVVA), 257-277 (IIMV…PPIE), 281-301 (FIPG…FFLW), and 317-337 (LGWK…GLAM).

The protein belongs to the complex I subunit 1 family. In terms of assembly, NDH-1 is composed of 14 different subunits. Subunits NuoA, H, J, K, L, M, N constitute the membrane sector of the complex.

It is found in the cell inner membrane. The catalysed reaction is a quinone + NADH + 5 H(+)(in) = a quinol + NAD(+) + 4 H(+)(out). Functionally, NDH-1 shuttles electrons from NADH, via FMN and iron-sulfur (Fe-S) centers, to quinones in the respiratory chain. The immediate electron acceptor for the enzyme in this species is believed to be ubiquinone. Couples the redox reaction to proton translocation (for every two electrons transferred, four hydrogen ions are translocated across the cytoplasmic membrane), and thus conserves the redox energy in a proton gradient. This subunit may bind ubiquinone. The sequence is that of NADH-quinone oxidoreductase subunit H from Magnetococcus marinus (strain ATCC BAA-1437 / JCM 17883 / MC-1).